The chain runs to 640 residues: Serine/threonine-protein kinase WNG1 (640 aa).

Positions 1–70 are cleaved as a signal peptide; the sequence is MPEQDLASGF…GVLCTVEAGA (70 aa). 2 disordered regions span residues 100–222 and 237–280; these read PEVT…AQPT and SHPD…DASN. Over residues 104–120 the composition is skewed to polar residues; it reads HASSEGSPQFESSLSQQ. A compositionally biased stretch (basic and acidic residues) spans 124–141; sequence RPADRGEAHNGEEPRKDA. Positions 175–186 are enriched in low complexity; the sequence is QRQASSAAESLA. A compositionally biased stretch (basic and acidic residues) spans 248–279; it reads FSKKQEGRRERRLAVRGDDSFARGHNRDRDAS. Positions 291–593 constitute a Protein kinase domain; sequence WAKIAALATG…LKQVMEDPYF (303 aa). Lys395 contacts ATP. Residue Asp486 is the Proton acceptor of the active site. The interval 609 to 640 is disordered; that stretch reads PFRGDFSIDDPDAGGKMYIPPSKEQDHEQENE. Basic and acidic residues predominate over residues 631–640; that stretch reads KEQDHEQENE.

It belongs to the protein kinase superfamily. STE Ser/Thr protein kinase family. WNG subfamily. Mg(2+) is required as a cofactor.

It is found in the cytoplasmic granule. It localises to the secreted. Its subcellular location is the parasitophorous vacuole lumen. It catalyses the reaction L-seryl-[protein] + ATP = O-phospho-L-seryl-[protein] + ADP + H(+). The catalysed reaction is L-threonyl-[protein] + ATP = O-phospho-L-threonyl-[protein] + ADP + H(+). Serine/threonine-protein kinase which, at the tachyzoite stage, phosphorylates several parasitophorous vacuole (PV)-resident proteins such as GRA2, GRA6 and GRA7. By phosphorylating GRA2 and GRA6, regulates the formation of a functional intravacuolar network (IVN); IVN is composed of membranous tubules that bud from the PV membrane into the vacuolar lumen. Plays a role in the establishement of chronic infection in the host by controlling cyst formation in the host tissues. The protein is Serine/threonine-protein kinase WNG1 of Toxoplasma gondii.